The following is a 34-amino-acid chain: MSDIN-like toxin proprotein 2 (34 aa).

A propeptide spanning residues Met-1–Pro-10 is cleaved from the precursor. The segment at residues Phe-11–Pro-20 is a cross-link (cyclopeptide (Phe-Pro)). Residues Cys-21 to Glu-34 constitute a propeptide that is removed on maturation.

The protein belongs to the MSDIN fungal toxin family. Processed by the macrocyclase-peptidase enzyme POPB to yield a toxic cyclic decapeptide. POPB first removes 10 residues from the N-terminus. Conformational trapping of the remaining peptide forces the enzyme to release this intermediate rather than proceed to macrocyclization. The enzyme rebinds the remaining peptide in a different conformation and catalyzes macrocyclization of the N-terminal 10 residues.

Its function is as follows. Probable toxin that belongs to the MSDIN-like toxin family responsible for a large number of food poisoning cases and deaths. The sequence is that of MSDIN-like toxin proprotein 2 from Amanita bisporigera (Destroying angel).